The sequence spans 374 residues: Putative clathrin assembly protein At1g33340 (374 aa).

Residues 30-163 (YNEKAFFDIE…GWIINQAGKL (134 aa)) form the ENTH domain.

It is found in the membrane. It localises to the clathrin-coated pit. Its subcellular location is the golgi apparatus. The protein localises to the cytoplasmic vesicle. The protein resides in the clathrin-coated vesicle. This Arabidopsis thaliana (Mouse-ear cress) protein is Putative clathrin assembly protein At1g33340.